Reading from the N-terminus, the 98-residue chain is Late cornified envelope-like proline-rich protein 1 (98 aa).

A disordered region spans residues 1–26 (MSSDDKSKSNDPKTEPKNCDPKCEQK).

Belongs to the cornifin (SPRR) family.

This chain is Late cornified envelope-like proline-rich protein 1 (LELP1), found in Homo sapiens (Human).